Reading from the N-terminus, the 124-residue chain is Small ribosomal subunit protein uS12 (124 aa).

The interval 1-30 (MPTIQQLVRKGRRDKVAKVKTAALKGSPQR) is disordered. A 3-methylthioaspartic acid modification is found at Asp-89. Residues 105 to 124 (QGVKNRKQARSRYGAKKEKS) are disordered. The segment covering 108 to 118 (KNRKQARSRYG) has biased composition (basic residues).

The protein belongs to the universal ribosomal protein uS12 family. As to quaternary structure, part of the 30S ribosomal subunit. Contacts proteins S8 and S17. May interact with IF1 in the 30S initiation complex.

Functionally, with S4 and S5 plays an important role in translational accuracy. In terms of biological role, interacts with and stabilizes bases of the 16S rRNA that are involved in tRNA selection in the A site and with the mRNA backbone. Located at the interface of the 30S and 50S subunits, it traverses the body of the 30S subunit contacting proteins on the other side and probably holding the rRNA structure together. The combined cluster of proteins S8, S12 and S17 appears to hold together the shoulder and platform of the 30S subunit. This Mycobacterium intracellulare protein is Small ribosomal subunit protein uS12.